We begin with the raw amino-acid sequence, 305 residues long: tRNA-cytidine(32) 2-sulfurtransferase (305 aa).

The interval 1 to 20 (MTAVLPLPQPLADPAPRDPR) is disordered. The short motif at 59–64 (SGGKDS) is the PP-loop motif element. The [4Fe-4S] cluster site is built by Cys134, Cys137, and Cys225. A disordered region spans residues 282–305 (DAPSGLDPDPRAWLSAGHATHDSD).

It belongs to the TtcA family. Homodimer. The cofactor is Mg(2+). [4Fe-4S] cluster serves as cofactor.

The protein localises to the cytoplasm. It catalyses the reaction cytidine(32) in tRNA + S-sulfanyl-L-cysteinyl-[cysteine desulfurase] + AH2 + ATP = 2-thiocytidine(32) in tRNA + L-cysteinyl-[cysteine desulfurase] + A + AMP + diphosphate + H(+). It participates in tRNA modification. Functionally, catalyzes the ATP-dependent 2-thiolation of cytidine in position 32 of tRNA, to form 2-thiocytidine (s(2)C32). The sulfur atoms are provided by the cysteine/cysteine desulfurase (IscS) system. This is tRNA-cytidine(32) 2-sulfurtransferase from Xanthomonas axonopodis pv. citri (strain 306).